Reading from the N-terminus, the 84-residue chain is Exodeoxyribonuclease 7 small subunit (84 aa).

It belongs to the XseB family. Heterooligomer composed of large and small subunits.

Its subcellular location is the cytoplasm. It catalyses the reaction Exonucleolytic cleavage in either 5'- to 3'- or 3'- to 5'-direction to yield nucleoside 5'-phosphates.. In terms of biological role, bidirectionally degrades single-stranded DNA into large acid-insoluble oligonucleotides, which are then degraded further into small acid-soluble oligonucleotides. The chain is Exodeoxyribonuclease 7 small subunit from Caulobacter vibrioides (strain ATCC 19089 / CIP 103742 / CB 15) (Caulobacter crescentus).